The following is a 738-amino-acid chain: Flowering time control protein FCA (738 aa).

The interval 1 to 118 is disordered; sequence MHRGGDRSTD…RGDHSDHDNR (118 aa). Gly residues-rich tracts occupy residues 52–70 and 81–98; these read RGGG…GGGR and SGGG…GEPG. Residues 109–118 are compositionally biased toward basic and acidic residues; that stretch reads RGDHSDHDNR. RRM domains lie at 122 to 203 and 213 to 293; these read VKLF…YADG and HKLF…FADP. 2 disordered regions span residues 292 to 414 and 566 to 594; these read DPKR…GHHL and QQSN…AIIP. Gly residues predominate over residues 301–311; the sequence is SRGGPAFGGPG. Over residues 342–358 the composition is skewed to polar residues; the sequence is HPSSPRSAPHQFNNFGS. Positions 368–377 are enriched in low complexity; the sequence is TVTSTTDTAT. 2 stretches are compositionally biased toward polar residues: residues 383–401 and 575–594; these read FSGN…SSHM and PTQG…AIIP. Residues 609–642 form the WW domain; sequence VPLTCNWTEHTSPEGFKYYYNSITRESKWDKPEE. Residues 670 to 738 form a disordered region; it reads MQQLQSPPQA…QSAQERAWKS (69 aa). Residues 683–706 are compositionally biased toward low complexity; sequence PAMQPVQQIPQAQQGQQQMQMKQQ. Polar residues predominate over residues 723–732; it reads RIQQGIQSAQ.

Interacts with FY. Binds to SF1, FIK, RPRD1B, Os09g0509000/LOC_Os09g33480 and MADS8. As to expression, mostly expressed in young flowers (panicles) and stems, and also present in young seedlings leaves and roots.

Its subcellular location is the nucleus. Plays a major role in the promotion of the transition of the vegetative meristem to reproductive development. Required for RNA-mediated chromatin silencing of a range of loci in the genome. Cotranscriptionally recognizes aberrant RNA and marks it for silencing. Controls alternative cleavage and polyadenylation on pre-mRNAs and antisense RNAs. Regulates flowering time, seed size and cell volume, probably via the modulation of cell size. The sequence is that of Flowering time control protein FCA from Oryza sativa subsp. japonica (Rice).